Reading from the N-terminus, the 360-residue chain is Peptide chain release factor 1 (360 aa).

An N5-methylglutamine modification is found at Gln235. Residues 284–293 (HKRQQEEAST) show a composition bias toward basic and acidic residues. The tract at residues 284 to 305 (HKRQQEEASTRRNLLGSGDRSD) is disordered.

The protein belongs to the prokaryotic/mitochondrial release factor family. Methylated by PrmC. Methylation increases the termination efficiency of RF1.

The protein resides in the cytoplasm. Its function is as follows. Peptide chain release factor 1 directs the termination of translation in response to the peptide chain termination codons UAG and UAA. This chain is Peptide chain release factor 1, found in Pectobacterium atrosepticum (strain SCRI 1043 / ATCC BAA-672) (Erwinia carotovora subsp. atroseptica).